We begin with the raw amino-acid sequence, 593 residues long: Zinc metalloproteinase-disintegrin-like kaouthiagin-like (593 aa).

A signal peptide spans Met-1–Ser-20. Residues Ile-21–Glu-196 constitute a propeptide that is removed on maturation. In terms of domain architecture, Peptidase M12B spans Lys-205–Pro-400. Glu-208 and Asp-292 together coordinate Ca(2+). Intrachain disulfides connect Cys-316/Cys-395, Cys-356/Cys-379, and Cys-358/Cys-363. Asn-319 is a glycosylation site (N-linked (GlcNAc...) asparagine). The Zn(2+) site is built by His-341, His-345, and His-351. 8 residues coordinate Ca(2+): Cys-395, Asn-398, Ile-410, Asn-413, Phe-415, Glu-417, Glu-420, and Asp-423. In terms of domain architecture, Disintegrin spans Pro-408 to Asn-477. 12 disulfide bridges follow: Cys-411–Cys-440, Cys-422–Cys-435, Cys-424–Cys-430, Cys-434–Cys-462, Cys-449–Cys-469, Cys-456–Cys-488, Cys-481–Cys-493, Cys-500–Cys-550, Cys-515–Cys-558, Cys-528–Cys-538, Cys-545–Cys-581, and Cys-575–Cys-586. The D/ECD-tripeptide motif lies at Asp-455–Asp-457. Residues Asp-457, Leu-458, Glu-460, Asp-472, and Ser-473 each contribute to the Ca(2+) site. Residue Asn-490 is glycosylated (N-linked (GlcNAc...) asparagine).

Belongs to the venom metalloproteinase (M12B) family. P-III subfamily. P-IIIa sub-subfamily. Monomer. The cofactor is Zn(2+). Expressed by the venom gland.

Its subcellular location is the secreted. Its function is as follows. Snake venom zinc metalloproteinase that cleaves the membrane-bound precursor of TNF-alpha (TNF) into its mature soluble form showing the same digestion pattern than ADAM17. In Naja atra (Chinese cobra), this protein is Zinc metalloproteinase-disintegrin-like kaouthiagin-like.